Here is a 287-residue protein sequence, read N- to C-terminus: Lactamase-like protein nscB (287 aa).

Residues H62, H64, D66, and H67 each contribute to the Zn(2+) site. D66 acts as the Proton donor/acceptor in catalysis.

This sequence belongs to the metallo-beta-lactamase superfamily. Requires Zn(2+) as cofactor.

It functions in the pathway secondary metabolite biosynthesis. In terms of biological role, lactamase-like protein; part of the gene cluster that mediates the biosynthesis of neosartoricin B, a prenylated anthracenone that probably exhibits T-cell antiproliferative activity, suggestive of a physiological role as an immunosuppressive agent. The non-reducing polyketide synthase nscA probably synthesizes and cyclizes the decaketide backbone. The hydrolase nscB then mediates the product release through hydrolysis followed by spontaneous decarboxylation. The prenyltransferase nscD catalyzes the addition of the dimethylallyl group to the aromatic C5. The FAD-dependent monooxygenase nscC is then responsible for the stereospecific hydroxylation at C2. Neosartoricin B can be converted into two additional compounds neosartoricins C and D. Neosartoricin C is a spirocyclic compound that is cyclized through the attack of C3 hydroxyl on C14, followed by dehydration. On the other hand, neosartoricin D is a further cyclized compound in which attack of C2 on C14 in neosartoricin C results in the formation of the acetal-containing dioxabicyclo-octanone ring. Both of these compounds are novel and possibly represent related metabolites of the gene cluster. This is Lactamase-like protein nscB from Trichophyton verrucosum (strain HKI 0517).